A 616-amino-acid chain; its full sequence is MAAKQKNYATETFTDPERIRNFCIIAHIDHGKSTLADRILQMSGVVEDRDMRDQYLDNMDIERERGITIKAQNVRLPWVPKTGAHAGEELVMHLIDTPGHVDFTYEVSRALEACEGCILLVDAAQGIEAQTLANLYLAMENDLEIIPVLNKIDLPAADPDKYALEIAHIIGCEPEDVLRVSGKTGEGVSELLDRVCELVPAPVGDADAPARAMIFDSVYDIYRGVVTYVRMMDGKLESRQKIQMMSTGATHETLEIGVVSPEPTKTKGLGVGEVGYIITGVKDVRQSKVGDTITWAVNGAETPLKGYQEPTPMVYSGLFPISADQYPDLREAIEKLQLNDASLTFEPETSVALGFGFRCGFLGLLHMEITRARLEREFDLDLISTAPSVVYRVVKEDGSEVMVRNPSDWPGGKMREIYEPIVKMTVIVPAEFLGATMELCQSKRGQMGGMDYLSEDRVELRYTMPLGEIIFDFFDQLKSRTKGYASLNYEEAGEQLADLVKVDILLQGDPVDAFSAIVHRENAHWYGNKMTVKLKELIPRQQFEVPVQAAIGSKIIARENIRALRKDVLSKCYGGDVSRKRKLLEKQKEGKKRMKAIGSVSVPQEAFVAALSTDAD.

The tr-type G domain maps to 17–203; the sequence is ERIRNFCIIA…RVCELVPAPV (187 aa). Residues 29-34 and 150-153 each bind GTP; these read DHGKST and NKID.

Belongs to the TRAFAC class translation factor GTPase superfamily. Classic translation factor GTPase family. LepA subfamily.

It is found in the cell membrane. The enzyme catalyses GTP + H2O = GDP + phosphate + H(+). In terms of biological role, required for accurate and efficient protein synthesis under certain stress conditions. May act as a fidelity factor of the translation reaction, by catalyzing a one-codon backward translocation of tRNAs on improperly translocated ribosomes. Back-translocation proceeds from a post-translocation (POST) complex to a pre-translocation (PRE) complex, thus giving elongation factor G a second chance to translocate the tRNAs correctly. Binds to ribosomes in a GTP-dependent manner. In Corynebacterium jeikeium (strain K411), this protein is Elongation factor 4.